The following is a 385-amino-acid chain: Probable tRNA sulfurtransferase (385 aa).

The 104-residue stretch at Asp57–Lys160 folds into the THUMP domain. ATP-binding positions include Met180–Leu181, Tyr205–Tyr206, Arg262, Gly284, and Gln293.

It belongs to the ThiI family.

It is found in the cytoplasm. It catalyses the reaction [ThiI sulfur-carrier protein]-S-sulfanyl-L-cysteine + a uridine in tRNA + 2 reduced [2Fe-2S]-[ferredoxin] + ATP + H(+) = [ThiI sulfur-carrier protein]-L-cysteine + a 4-thiouridine in tRNA + 2 oxidized [2Fe-2S]-[ferredoxin] + AMP + diphosphate. It carries out the reaction [ThiS sulfur-carrier protein]-C-terminal Gly-Gly-AMP + S-sulfanyl-L-cysteinyl-[cysteine desulfurase] + AH2 = [ThiS sulfur-carrier protein]-C-terminal-Gly-aminoethanethioate + L-cysteinyl-[cysteine desulfurase] + A + AMP + 2 H(+). It participates in cofactor biosynthesis; thiamine diphosphate biosynthesis. Its function is as follows. Catalyzes the ATP-dependent transfer of a sulfur to tRNA to produce 4-thiouridine in position 8 of tRNAs, which functions as a near-UV photosensor. Also catalyzes the transfer of sulfur to the sulfur carrier protein ThiS, forming ThiS-thiocarboxylate. This is a step in the synthesis of thiazole, in the thiamine biosynthesis pathway. The sulfur is donated as persulfide by IscS. The polypeptide is Probable tRNA sulfurtransferase (Clostridium perfringens (strain ATCC 13124 / DSM 756 / JCM 1290 / NCIMB 6125 / NCTC 8237 / Type A)).